A 300-amino-acid chain; its full sequence is Sodium/potassium/calcium exchanger 1 (300 aa).

The interval 1–251 is disordered; it reads DPGSQGVGAE…ENEQPLSLEW (251 aa). Acidic residues-rich tracts occupy residues 92–102, 109–119, 126–136, 158–175, and 215–244; these read GEVEGDEDEGE, GEVEGEDGEVEGGEDEGE, and GDSEDEEEEDEEEDEEEEEEEEEEEEEENE. The helical transmembrane segment at 259–275 threads the bilayer; it reads AIYLFLLPIVFPLWLTV.

Belongs to the Ca(2+):cation antiporter (CaCA) (TC 2.A.19) family. SLC24A subfamily. The uncleaved signal sequence is required for efficient membrane targeting and proper membrane integration and topology.

The protein resides in the cell membrane. It carries out the reaction Ca(2+)(out) + K(+)(out) + 4 Na(+)(in) = Ca(2+)(in) + K(+)(in) + 4 Na(+)(out). Its function is as follows. Calcium, potassium:sodium antiporter that transports 1 Ca(2+) and 1 K(+) in exchange for 4 Na(+). Critical component of the visual transduction cascade, controlling the calcium concentration of outer segments during light and darkness. Light causes a rapid lowering of cytosolic free calcium in the outer segment of both retinal rod and cone photoreceptors and the light-induced lowering of calcium is caused by extrusion via this protein which plays a key role in the process of light adaptation. The sequence is that of Sodium/potassium/calcium exchanger 1 (SLC24A1) from Bison bison (American bison).